The following is a 97-amino-acid chain: Exodeoxyribonuclease 7 small subunit (97 aa).

The interval 1–22 (MAKTASPGATPPGNGTEPLPDN) is disordered.

The protein belongs to the XseB family. In terms of assembly, heterooligomer composed of large and small subunits.

Its subcellular location is the cytoplasm. It carries out the reaction Exonucleolytic cleavage in either 5'- to 3'- or 3'- to 5'-direction to yield nucleoside 5'-phosphates.. Functionally, bidirectionally degrades single-stranded DNA into large acid-insoluble oligonucleotides, which are then degraded further into small acid-soluble oligonucleotides. This is Exodeoxyribonuclease 7 small subunit from Burkholderia lata (strain ATCC 17760 / DSM 23089 / LMG 22485 / NCIMB 9086 / R18194 / 383).